Consider the following 200-residue polypeptide: Transcription factor FapR (200 aa).

This sequence belongs to the FapR family.

Functionally, transcriptional factor involved in regulation of membrane lipid biosynthesis by repressing genes involved in fatty acid and phospholipid metabolism. This is Transcription factor FapR from Thermoanaerobacter pseudethanolicus (strain ATCC 33223 / 39E) (Clostridium thermohydrosulfuricum).